An 806-amino-acid polypeptide reads, in one-letter code: Enhancer of polycomb-like protein 1 (806 aa).

2 disordered regions span residues 403-461 (AITS…QEIG) and 751-806 (SLQQ…NAAA). Over residues 411–420 (KRAKSSKSSK) the composition is skewed to basic residues. The segment covering 421–439 (LHKEDSGLYADEKGSEPKK) has biased composition (basic and acidic residues). Residues 751–779 (SLQQQQMLQKGQQPINNAPHSQSSSPPSH) show a composition bias toward low complexity. Residues 785 to 795 (NPGSTPNQSSP) are compositionally biased toward polar residues.

This sequence belongs to the enhancer of polycomb family. As to quaternary structure, component of the NuA4 histone acetyltransferase complex.

The protein localises to the nucleus. Its function is as follows. Component of the NuA4 histone acetyltransferase complex which is involved in transcriptional activation of selected genes principally by acetylation of nucleosomal histone H4 and H2A. The NuA4 complex is also involved in DNA repair. Involved in gene silencing by neighboring heterochromatin, blockage of the silencing spreading along the chromosome, and required for cell cycle progression through G2/M. In Kluyveromyces lactis (strain ATCC 8585 / CBS 2359 / DSM 70799 / NBRC 1267 / NRRL Y-1140 / WM37) (Yeast), this protein is Enhancer of polycomb-like protein 1 (EPL1).